We begin with the raw amino-acid sequence, 491 residues long: Trehalose-6-phosphate synthase (491 aa).

Arg-22 serves as a coordination point for D-glucose 6-phosphate. UDP-alpha-D-glucose is bound at residue 42 to 43 (GG). D-glucose 6-phosphate-binding residues include Tyr-100 and Asp-154. Arg-296 and Lys-301 together coordinate UDP-alpha-D-glucose. D-glucose 6-phosphate is bound at residue Arg-334. 399-403 (LVAKE) is a UDP-alpha-D-glucose binding site.

It belongs to the glycosyltransferase 20 family. As to quaternary structure, homotetramer.

The catalysed reaction is ADP-alpha-D-glucose + D-glucose 6-phosphate = alpha,alpha-trehalose 6-phosphate + ADP + H(+). It catalyses the reaction CDP-alpha-D-glucose + D-glucose 6-phosphate = alpha,alpha-trehalose 6-phosphate + CDP + H(+). It carries out the reaction GDP-alpha-D-glucose + D-glucose 6-phosphate = alpha,alpha-trehalose 6-phosphate + GDP + H(+). The enzyme catalyses TDP-alpha-D-glucose + D-glucose 6-phosphate = 5-methyl-UDP + alpha,alpha-trehalose 6-phosphate + H(+). The catalysed reaction is D-glucose 6-phosphate + UDP-alpha-D-glucose = alpha,alpha-trehalose 6-phosphate + UDP + H(+). It participates in glycan biosynthesis; trehalose biosynthesis. Probably involved in the osmoprotection via the biosynthesis of trehalose and in the production of glycogen and alpha-glucan via the TreS-Pep2 branch involved in the biosynthesis of maltose-1-phosphate (M1P). Catalyzes the transfer of glucose from UDP-glucose (UDP-Glc) to D-glucose 6-phosphate (Glc-6-P) to form trehalose-6-phosphate. Probably also able to use ADP-Glc, CDP-Glc, GDP-Glc and TDP-Glc as glucosyl donors. The protein is Trehalose-6-phosphate synthase of Mycolicibacterium vanbaalenii (strain DSM 7251 / JCM 13017 / BCRC 16820 / KCTC 9966 / NRRL B-24157 / PYR-1) (Mycobacterium vanbaalenii).